The following is a 75-amino-acid chain: Pro-glucagon (75 aa).

This sequence belongs to the glucagon family.

It localises to the secreted. Its function is as follows. Plays a key role in glucose metabolism and homeostasis. Regulates blood glucose by increasing gluconeogenesis and decreasing glycolysis. The protein is Pro-glucagon (gcg) of Amia calva (Bowfin).